A 467-amino-acid chain; its full sequence is Ankyrin repeat and SOCS box protein 10 (467 aa).

ANK repeat units lie at residues 115–144, 147–176, 180–209, 214–243, 247–289, 293–322, and 326–361; these read ELTTPLHVAASRGHTEVLELLLRRRAKPDS, GGRTALHEACSAGHAACVRVLLVAGADPNT, DGKRPLHLCRGPGILECVELLLKFGAQVDG, EEETPLHIAARLGHVELADLLLRWGACPDV, EGWT…DADA, DKQRPLHLACRHGHSAVVQLLLSCGVNANA, and GGHTPLHCALLGPTTAVAHSPEHTVRDLLNHGAVRV. One can recognise an SOCS box domain in the interval 412–467; that stretch reads YSSLFALVRQPRSLQHLCRCALRSHLEGCLPHALPRLPLPPRMLRFLQLDFEDLLY.

This sequence belongs to the ankyrin SOCS box (ASB) family.

The protein resides in the nucleus. Its subcellular location is the cytoplasm. Its pathway is protein modification; protein ubiquitination. Functionally, may be a substrate-recognition component of a SCF-like ECS (Elongin-Cullin-SOCS-box protein) E3 ubiquitin-protein ligase complex which mediates the ubiquitination and subsequent proteasomal degradation of target proteins. The sequence is that of Ankyrin repeat and SOCS box protein 10 (Asb10) from Mus musculus (Mouse).